We begin with the raw amino-acid sequence, 782 residues long: E3 UFM1-protein ligase 1 homolog (782 aa).

A disordered region spans residues 405 to 478 (VSTQELEDDG…TRGGGGASKK (74 aa)).

Belongs to the UFL1 family.

Its function is as follows. E3 UFM1-protein ligase that mediates ufmylation of target proteins. The sequence is that of E3 UFM1-protein ligase 1 homolog from Drosophila sechellia (Fruit fly).